The sequence spans 432 residues: Ribosomal protein uS12 methylthiotransferase RimO (432 aa).

One can recognise an MTTase N-terminal domain in the interval 2–115 (IRVAVITLGC…LPEIINRVLK (114 aa)). Positions 11, 47, 78, 151, 155, and 158 each coordinate [4Fe-4S] cluster. One can recognise a Radical SAM core domain in the interval 137–367 (EDGKPFAYLK…MLHQQSITRA (231 aa)).

The protein belongs to the methylthiotransferase family. RimO subfamily. Requires [4Fe-4S] cluster as cofactor.

The protein localises to the cytoplasm. The enzyme catalyses L-aspartate(89)-[ribosomal protein uS12]-hydrogen + (sulfur carrier)-SH + AH2 + 2 S-adenosyl-L-methionine = 3-methylsulfanyl-L-aspartate(89)-[ribosomal protein uS12]-hydrogen + (sulfur carrier)-H + 5'-deoxyadenosine + L-methionine + A + S-adenosyl-L-homocysteine + 2 H(+). In terms of biological role, catalyzes the methylthiolation of an aspartic acid residue of ribosomal protein uS12. This Moorella thermoacetica (strain ATCC 39073 / JCM 9320) protein is Ribosomal protein uS12 methylthiotransferase RimO.